The primary structure comprises 309 residues: Protein MAK16 homolog (309 aa).

The segment at 194 to 309 is disordered; that stretch reads EADQFSEEEA…IEEETENQAN (116 aa). Composition is skewed to acidic residues over residues 195–227 and 235–270; these read ADQF…DIED and VEGD…DDEE. Residues 275–293 are compositionally biased toward basic residues; that stretch reads ITKKRGPTFKPTKKTPQKR. Residues 299–309 are compositionally biased toward acidic residues; sequence EIEEETENQAN.

The protein belongs to the MAK16 family.

The protein resides in the nucleus. Its subcellular location is the nucleolus. The polypeptide is Protein MAK16 homolog (mak16l) (Dictyostelium discoideum (Social amoeba)).